Reading from the N-terminus, the 682-residue chain is Potassium-transporting ATPase ATP-binding subunit (682 aa).

Helical transmembrane passes span 34 to 54, 62 to 82, 219 to 239, and 254 to 274; these read PVMFIVWIGSLLTTCISIAMA, ALFSAAISGWLWVTVLFANFA, IALTILLIALTIVFLLATATL, and VLVALLVCLIPTTIGGLLSAI. Residue Asp-307 is the 4-aspartylphosphate intermediate of the active site. Residues Asp-344, Glu-348, 377-384, and Lys-395 each bind ATP; that span reads FTAQSRMS. 2 residues coordinate Mg(2+): Asp-518 and Asp-522. 3 consecutive transmembrane segments (helical) span residues 588–608, 616–636, and 656–676; these read FAIIPAAFAATYPQLNALNIM, AILSAVIFNALIIVFLIPLAL, and IYGLGGLLVPFIGIKVIDLLL.

Belongs to the cation transport ATPase (P-type) (TC 3.A.3) family. Type IA subfamily. In terms of assembly, the system is composed of three essential subunits: KdpA, KdpB and KdpC.

The protein resides in the cell inner membrane. It carries out the reaction K(+)(out) + ATP + H2O = K(+)(in) + ADP + phosphate + H(+). Its function is as follows. Part of the high-affinity ATP-driven potassium transport (or Kdp) system, which catalyzes the hydrolysis of ATP coupled with the electrogenic transport of potassium into the cytoplasm. This subunit is responsible for energy coupling to the transport system and for the release of the potassium ions to the cytoplasm. The sequence is that of Potassium-transporting ATPase ATP-binding subunit from Escherichia coli O8 (strain IAI1).